Here is a 383-residue protein sequence, read N- to C-terminus: WAT1-related protein At3g18200 (383 aa).

The span at 1-16 shows a compositional bias: basic residues; that stretch reads MCYQTSKKKRRSRKRR. The interval 1-23 is disordered; sequence MCYQTSKKKRRSRKRRAQEEKEK. 10 helical membrane passes run 33–53, 65–85, 91–111, 126–146, 158–178, 204–224, 237–257, 272–292, 300–320, and 325–345; these read VKLVVALITLQFCFAGFHIVS, VYPVYRNLLALLLIGPFAYFF, PPLTISLLAQFFFLALIGITA, TFASAMQNSVPAITFIMACAL, GVAKVLGTLVSIGGATVITLY, LTLGWLYLMGHCLSWAGWMVL, TLTSFTCFFGLIQFLVIALFV, LFTILYAGIIASGLVVYLQTW, VFVAVFQPLQTLLVAAMAFLI, and LYSGGIVGAVFIMLGLYLVLW. EamA domains are found at residues 44–173 and 216–344; these read FCFA…GGAT and LSWA…YLVL.

This sequence belongs to the drug/metabolite transporter (DMT) superfamily. Plant drug/metabolite exporter (P-DME) (TC 2.A.7.4) family.

It localises to the membrane. In Arabidopsis thaliana (Mouse-ear cress), this protein is WAT1-related protein At3g18200.